The sequence spans 689 residues: Probable serine/threonine-protein kinase abkC (689 aa).

The tract at residues 42 to 79 is disordered; it reads NNSGNENYKNFNYNYKNKNNYNNNNNNNNSNSSSNNNG. One can recognise a Protein kinase domain in the interval 257-689; sequence WFDEEPMASG…NNKNNNEKNK (433 aa). ATP contacts are provided by residues 263–271 and K285; that span reads MASGSVAQV. D417 acts as the Proton acceptor in catalysis. The segment at 652 to 689 is disordered; the sequence is KQLNNDNNNNNNNNNNNKNNNDNNNKNNNNKNNNEKNK. Residues 655 to 683 are compositionally biased toward low complexity; the sequence is NNDNNNNNNNNNNNKNNNDNNNKNNNNKN.

This sequence belongs to the protein kinase superfamily. ADCK protein kinase family.

The protein is Probable serine/threonine-protein kinase abkC (abkC) of Dictyostelium discoideum (Social amoeba).